The following is a 414-amino-acid chain: CinA-like protein (414 aa).

This sequence belongs to the CinA family.

The chain is CinA-like protein from Geobacter sp. (strain M21).